The chain runs to 188 residues: Threonylcarbamoyl-AMP synthase (188 aa).

The YrdC-like domain maps to 8-188 (EGAQPGLHAY…DLATGKILRA (181 aa)).

It belongs to the SUA5 family. TsaC subfamily.

It is found in the cytoplasm. The enzyme catalyses L-threonine + hydrogencarbonate + ATP = L-threonylcarbamoyladenylate + diphosphate + H2O. Functionally, required for the formation of a threonylcarbamoyl group on adenosine at position 37 (t(6)A37) in tRNAs that read codons beginning with adenine. Catalyzes the conversion of L-threonine, HCO(3)(-)/CO(2) and ATP to give threonylcarbamoyl-AMP (TC-AMP) as the acyladenylate intermediate, with the release of diphosphate. This is Threonylcarbamoyl-AMP synthase from Thiobacillus denitrificans (strain ATCC 25259 / T1).